The chain runs to 107 residues: Transcriptional regulator Rv3488 (107 aa).

Cd(2+)-binding residues include H16, E30, H34, and H101.

As to quaternary structure, homodimer.

Functionally, may have transcription regulation and metal-detoxifying functions through which it may enhance intracellular survival of mycobacteria. Binds to its own promoter region and to the Rv1999c promoter region. It displays strong affinity for cadmium ions, but can also bind zinc, manganese and nickel. Expression increases the intracellular survival of recombinant M.smegmatis in murine macrophage cell line and increases its tolerance to cadmium ions. The sequence is that of Transcriptional regulator Rv3488 from Mycobacterium tuberculosis (strain ATCC 25618 / H37Rv).